A 330-amino-acid chain; its full sequence is Probable cytosolic iron-sulfur protein assembly protein 1 (330 aa).

7 WD repeats span residues 12-49 (LYKEKIWSFDFSQGILATGSTDRKIKLVSVKDDDFTLI), 56-95 (AHKKAIRSVAWRPHTSLLAAGSFDSTVSIWAKEESADRTF), 105-144 (GHENEVKGVAWSNDGYYLATCSRDKSVWIWETDESGEEYE), 151-190 (EHSQDVKHVIWHPSEALLASSSYDDTVRIWKDYDDDWECV), 195-236 (GHEG…EDDQ), 248-286 (VHKRQVYNVAWGFNGLIASVGADGVLAVYEEVDGEWKVF), and 292-330 (CHGVYEINVVKWLELNGKTILATGGDDGIVNFWSLEKAA).

This sequence belongs to the WD repeat CIA1 family. Interacts with NAR1.

The protein resides in the cytoplasm. Its subcellular location is the nucleus. Functionally, essential component of the cytosolic iron-sulfur (Fe/S) protein assembly machinery. Required for the maturation of extramitochondrial Fe/S proteins. The chain is Probable cytosolic iron-sulfur protein assembly protein 1 from Saccharomyces cerevisiae (strain YJM789) (Baker's yeast).